We begin with the raw amino-acid sequence, 435 residues long: Citrate synthase (435 aa).

Catalysis depends on residues H311 and D370.

It belongs to the citrate synthase family.

The enzyme catalyses oxaloacetate + acetyl-CoA + H2O = citrate + CoA + H(+). It functions in the pathway carbohydrate metabolism; tricarboxylic acid cycle; isocitrate from oxaloacetate: step 1/2. This chain is Citrate synthase (gltA), found in Rickettsia slovaca (strain 13-B).